Consider the following 334-residue polypeptide: Sterol 4-C-methyltransferase strm-1 (334 aa).

The protein belongs to the class I-like SAM-binding methyltransferase superfamily. Erg6/SMT family. As to expression, expressed in the pharynx and hypodermal syncytium.

The catalysed reaction is 5alpha-cholest-7-en-3-one + S-adenosyl-L-methionine = 4alpha-methyl-5alpha-cholest-7-en-3-one + S-adenosyl-L-homocysteine + H(+). It functions in the pathway steroid hormone biosynthesis; dafachronic acid biosynthesis. In terms of biological role, catalyzes the methyl transfer from S-adenosyl-methionine to the C-4 of the A-ring sterols such as lathosterone (5alpha-cholest-7-en-3-one) thereby rendering them unsuitable as ligand precursors. May irreversibly shunt sterols away from hormone dafachronic acid production. Dafachronic acids act as ligands and bind directly to the nuclear hormone receptor (NHR) daf-12 suppressing dauer formation and inducing reproductive growth. By reducing the biosynthesis of dafachronic acids, this methyltransferase can regulate dauer larva formation. This chain is Sterol 4-C-methyltransferase strm-1 (strm-1), found in Caenorhabditis elegans.